The chain runs to 387 residues: Phosphoglycerate kinase (387 aa).

Residues Asp21–Asn23, Arg36, His59–Arg62, Arg113, and Arg146 each bind substrate. ATP-binding positions include Lys197, Glu314, and Gly340 to Thr343.

The protein belongs to the phosphoglycerate kinase family. In terms of assembly, monomer.

Its subcellular location is the cytoplasm. It carries out the reaction (2R)-3-phosphoglycerate + ATP = (2R)-3-phospho-glyceroyl phosphate + ADP. Its pathway is carbohydrate degradation; glycolysis; pyruvate from D-glyceraldehyde 3-phosphate: step 2/5. The polypeptide is Phosphoglycerate kinase (Aeromonas hydrophila subsp. hydrophila (strain ATCC 7966 / DSM 30187 / BCRC 13018 / CCUG 14551 / JCM 1027 / KCTC 2358 / NCIMB 9240 / NCTC 8049)).